We begin with the raw amino-acid sequence, 428 residues long: Histidinol dehydrogenase (428 aa).

NAD(+) contacts are provided by Y125, Q187, and N210. The substrate site is built by S234, Q256, and H259. The Zn(2+) site is built by Q256 and H259. Residues E323 and H324 each act as proton acceptor in the active site. Substrate contacts are provided by H324, D357, E411, and H416. Position 357 (D357) interacts with Zn(2+). H416 provides a ligand contact to Zn(2+).

Belongs to the histidinol dehydrogenase family. The cofactor is Zn(2+).

It carries out the reaction L-histidinol + 2 NAD(+) + H2O = L-histidine + 2 NADH + 3 H(+). It functions in the pathway amino-acid biosynthesis; L-histidine biosynthesis; L-histidine from 5-phospho-alpha-D-ribose 1-diphosphate: step 9/9. In terms of biological role, catalyzes the sequential NAD-dependent oxidations of L-histidinol to L-histidinaldehyde and then to L-histidine. The sequence is that of Histidinol dehydrogenase from Bacteroides thetaiotaomicron (strain ATCC 29148 / DSM 2079 / JCM 5827 / CCUG 10774 / NCTC 10582 / VPI-5482 / E50).